A 298-amino-acid chain; its full sequence is Short-chain dehydrogenase reductase 4 (298 aa).

50–74 contacts NAD(+); it reads IITGGASGIGAEAVRLFTDHGAKVV. Residue serine 182 participates in substrate binding. Tyrosine 195 acts as the Proton acceptor in catalysis.

It belongs to the short-chain dehydrogenases/reductases (SDR) family.

In Arabidopsis thaliana (Mouse-ear cress), this protein is Short-chain dehydrogenase reductase 4 (SDR4).